The following is a 315-amino-acid chain: Aspartate carbamoyltransferase catalytic subunit (315 aa).

Arg-64 and Thr-65 together coordinate carbamoyl phosphate. Residue Lys-92 coordinates L-aspartate. Residues Arg-114, His-142, and Gln-145 each coordinate carbamoyl phosphate. The L-aspartate site is built by Arg-175 and Arg-229. Carbamoyl phosphate is bound by residues Gly-270 and Pro-271.

The protein belongs to the aspartate/ornithine carbamoyltransferase superfamily. ATCase family. As to quaternary structure, heterododecamer (2C3:3R2) of six catalytic PyrB chains organized as two trimers (C3), and six regulatory PyrI chains organized as three dimers (R2).

The enzyme catalyses carbamoyl phosphate + L-aspartate = N-carbamoyl-L-aspartate + phosphate + H(+). It participates in pyrimidine metabolism; UMP biosynthesis via de novo pathway; (S)-dihydroorotate from bicarbonate: step 2/3. Its function is as follows. Catalyzes the condensation of carbamoyl phosphate and aspartate to form carbamoyl aspartate and inorganic phosphate, the committed step in the de novo pyrimidine nucleotide biosynthesis pathway. The polypeptide is Aspartate carbamoyltransferase catalytic subunit (Methylorubrum extorquens (strain CM4 / NCIMB 13688) (Methylobacterium extorquens)).